The following is a 337-amino-acid chain: MLLLALLLLLELSLAGSLGPGSSAQNLPENHIDLSGPALWTPQASHHRRRGLGKKERGPGTPGWTQDGAVVTATRQASRLPGAEGLLHGSSPAGLLQDKGLLRGLTRPYPEKETQAPGSERVKKRGREHKRRKERLRLHRGRALVRGPSSLMKKAELSEDQSPDALMEESSTSLAPTILYLTTFEAPATEESLILPVTSLWPQAHPRPDGEVMPTLDMALFDWTDYEDLKPEVWPSTRKKEKHRGKLSSDGNETSPAKGEPCDHHQDCLPGTCCDLREHLCTPHNRGLNNKCFDDCMCVEGLRCYAKFHRNRRVTRRKGRCVEPETANGDQGSFINV.

Residues 1–24 form the signal peptide; it reads MLLLALLLLLELSLAGSLGPGSSA. 3 disordered regions span residues 36–67, 107–133, and 234–261; these read GPAL…WTQD, RPYP…KRRK, and WPST…KGEP. 2 stretches are compositionally biased toward basic residues: residues 122–133 and 237–246; these read VKKRGREHKRRK and TRKKEKHRGK. The N-linked (GlcNAc...) asparagine glycan is linked to Asn-252.

This sequence belongs to the draxin family. Interacts with LRP6.

The protein localises to the secreted. Chemorepulsive axon guidance protein required for the development of spinal cord and forebrain commissures. Acts as a chemorepulsive guidance protein for commissural axons during development. Able to inhibit or repel neurite outgrowth from dorsal spinal cord. Inhibits the stabilization of cytosolic beta-catenin (CTNNB1) via its interaction with LRP6, thereby acting as an antagonist of Wnt signaling pathway. In Bos taurus (Bovine), this protein is Draxin.